A 110-amino-acid polypeptide reads, in one-letter code: Body wall hemoglobin (110 aa).

One can recognise a Globin domain in the interval 2-110; sequence VNWAAVVDAF…GAVDAIISHF (109 aa). Histidine 70 lines the heme pocket.

Belongs to the globin family. In terms of assembly, homotetramer.

The sequence is that of Body wall hemoglobin from Cerebratulus lacteus (Milky ribbon worm).